Here is a 101-residue protein sequence, read N- to C-terminus: uncharacterized protein (101 aa).

This is an uncharacterized protein from Schizosaccharomyces pombe (strain 972 / ATCC 24843) (Fission yeast).